Reading from the N-terminus, the 306-residue chain is Ribonuclease Z (306 aa).

Residues H63, H65, D67, H68, H140, D211, and H269 each contribute to the Zn(2+) site. D67 (proton acceptor) is an active-site residue.

The protein belongs to the RNase Z family. Homodimer. Requires Zn(2+) as cofactor.

The enzyme catalyses Endonucleolytic cleavage of RNA, removing extra 3' nucleotides from tRNA precursor, generating 3' termini of tRNAs. A 3'-hydroxy group is left at the tRNA terminus and a 5'-phosphoryl group is left at the trailer molecule.. Functionally, zinc phosphodiesterase, which displays some tRNA 3'-processing endonuclease activity. Probably involved in tRNA maturation, by removing a 3'-trailer from precursor tRNA. The protein is Ribonuclease Z of Listeria monocytogenes serovar 1/2a (strain ATCC BAA-679 / EGD-e).